A 252-amino-acid chain; its full sequence is MSNAAAPATEGPDRSDAPAHVAIIMDGNGRWAAARGLPRAEGHRRGVEALRRVVRASHELGIRYLTIFSFSSENWSRPASEIGDLFGLLRRFIRNDLASLHRDGVKVRIIGERDGLESDICALLNEAEELTRDNSRLTLVVAFNYGSRQEIAKAAQKLAREVAEGRRDPATIDAETLGAHLDAPDIPDPDLIIRTSGEQRLSNFLMWQAAYSELVFVPIHWPDFDKAALEGAIAEFARRERRFGGLVAKTAS.

The active site involves D26. D26 serves as a coordination point for Mg(2+). Substrate contacts are provided by residues G27–R30, W31, R39, H43, and S71–E73. The active-site Proton acceptor is the N74. Substrate-binding positions include W75, R77, R194, and R200–S202. Mg(2+) is bound at residue E213.

The protein belongs to the UPP synthase family. In terms of assembly, homodimer. Requires Mg(2+) as cofactor.

In terms of biological role, catalyzes the condensation of isopentenyl diphosphate (IPP) with allylic pyrophosphates generating different type of terpenoids. The protein is Isoprenyl transferase 2 of Bradyrhizobium diazoefficiens (strain JCM 10833 / BCRC 13528 / IAM 13628 / NBRC 14792 / USDA 110).